We begin with the raw amino-acid sequence, 182 residues long: UPF0690 protein C1orf52 (182 aa).

Disordered stretches follow at residues 1–67 and 100–182; these read MAAE…RSVT and WKSN…KKKK. Residues 23 to 32 show a composition bias toward acidic residues; that stretch reads SDEEDNIEPE. Basic and acidic residues predominate over residues 50 to 63; it reads NKAEKRLPGPDELF. T67 bears the Phosphothreonine mark. Y132 carries the post-translational modification Phosphotyrosine. A compositionally biased stretch (acidic residues) spans 151-162; the sequence is EGEETLESDDEK. Phosphoserine is present on S158. The span at 172-182 shows a compositional bias: basic and acidic residues; that stretch reads VEPGEPAKKKK.

Belongs to the UPF0690 family. Expressed in all tissues tested including heart, placenta, liver, skeletal muscle, kidney and pancreas. Weak expression in brain and lung.

This Homo sapiens (Human) protein is UPF0690 protein C1orf52 (C1orf52).